Consider the following 131-residue polypeptide: Calvin cycle protein CP12-2, chloroplastic (131 aa).

The N-terminal 53 residues, 1–53 (MATIATGLNIATQRVFVTSENRPVCLAGPVHLNNSWNLGSRTTNRMMKLQPIK), are a transit peptide targeting the chloroplast. 2 cysteine pairs are disulfide-bonded: cysteine 75/cysteine 84 and cysteine 117/cysteine 126. Residues 97–131 (AASHARDKKKADGSDPLEEYCKDNPETNECRTYDN) are disordered. Basic and acidic residues predominate over residues 105–131 (KKADGSDPLEEYCKDNPETNECRTYDN).

It belongs to the CP12 family. Monomer. Component of a complex that contains two dimers of PRK, two tetramers of GAPDH and CP12. CP12 associates with GAPDH, causing its conformation to change. This GAPDH/CP12 complex binds PRK to form a half-complex (one unit). This unit probably dimerizes due partially to interactions between the enzymes of each unit. Contains two disulfide bonds; only the oxidized protein, with two disulfide bonds, is active in complex formation. The C-terminal disulfide is involved in the interaction with GAPDH and the N-terminal disulfide mediates the binding of PRK with this binary complex. Mostly expressed in cotyledons, leaves and flower stalks, and, to a lower extent, in flowers and stems. Barely detectable in roots and siliques.

The protein resides in the plastid. It localises to the chloroplast. In terms of biological role, acts as a linker essential in the assembly of a core complex of PRK/GAPDH. Coordinates the reversible inactivation of chloroplast enzymes GAPDH and PRK during darkness in photosynthetic tissues. The protein is Calvin cycle protein CP12-2, chloroplastic (CP12-2) of Arabidopsis thaliana (Mouse-ear cress).